Consider the following 350-residue polypeptide: Glycerol-1-phosphate dehydrogenase [NAD(P)+] (350 aa).

NAD(+) contacts are provided by residues 97–101 and 119–122; these read GSIID and TTAS. Asp124 is a substrate binding site. Ser128 contributes to the NAD(+) binding site. Asp171 is a binding site for substrate. Zn(2+) is bound by residues Asp171 and His251. Residue His255 participates in substrate binding. Residue His267 participates in Zn(2+) binding.

Belongs to the glycerol-1-phosphate dehydrogenase family. Zn(2+) is required as a cofactor.

It is found in the cytoplasm. The catalysed reaction is sn-glycerol 1-phosphate + NAD(+) = dihydroxyacetone phosphate + NADH + H(+). It carries out the reaction sn-glycerol 1-phosphate + NADP(+) = dihydroxyacetone phosphate + NADPH + H(+). Its pathway is membrane lipid metabolism; glycerophospholipid metabolism. Catalyzes the NAD(P)H-dependent reduction of dihydroxyacetonephosphate (DHAP or glycerone phosphate) to glycerol 1-phosphate (G1P). The G1P thus generated is used as the glycerophosphate backbone of phospholipids in the cellular membranes of Archaea. The polypeptide is Glycerol-1-phosphate dehydrogenase [NAD(P)+] (Thermococcus sibiricus (strain DSM 12597 / MM 739)).